A 226-amino-acid polypeptide reads, in one-letter code: Putative type II restriction enzyme MjaVIP (226 aa).

It belongs to the BsaWI type II restriction endonuclease family.

It catalyses the reaction Endonucleolytic cleavage of DNA to give specific double-stranded fragments with terminal 5'-phosphates.. In terms of biological role, a P subtype restriction enzyme that recognizes the double-stranded sequence 5'-CCGG-3'; the cleavage site is unknown. This chain is Putative type II restriction enzyme MjaVIP (mjaVIRP), found in Methanocaldococcus jannaschii (strain ATCC 43067 / DSM 2661 / JAL-1 / JCM 10045 / NBRC 100440) (Methanococcus jannaschii).